Reading from the N-terminus, the 155-residue chain is Small ribosomal subunit protein uS7c (155 aa).

Belongs to the universal ribosomal protein uS7 family. In terms of assembly, part of the 30S ribosomal subunit.

It localises to the plastid. The protein resides in the chloroplast. Its function is as follows. One of the primary rRNA binding proteins, it binds directly to 16S rRNA where it nucleates assembly of the head domain of the 30S subunit. This is Small ribosomal subunit protein uS7c (rps7) from Yucca glauca (Soapweed yucca).